The primary structure comprises 621 residues: tRNA uridine 5-carboxymethylaminomethyl modification enzyme MnmG (621 aa).

9-14 (GGGHAG) provides a ligand contact to FAD. 270 to 284 (GPRYCPSIEDKIVKF) contributes to the NAD(+) binding site.

It belongs to the MnmG family. Homodimer. Heterotetramer of two MnmE and two MnmG subunits. It depends on FAD as a cofactor.

The protein localises to the cytoplasm. Functionally, NAD-binding protein involved in the addition of a carboxymethylaminomethyl (cmnm) group at the wobble position (U34) of certain tRNAs, forming tRNA-cmnm(5)s(2)U34. The sequence is that of tRNA uridine 5-carboxymethylaminomethyl modification enzyme MnmG from Borrelia garinii subsp. bavariensis (strain ATCC BAA-2496 / DSM 23469 / PBi) (Borreliella bavariensis).